Reading from the N-terminus, the 236-residue chain is Ribose-5-phosphate isomerase A (236 aa).

Substrate-binding positions include 28 to 31 (TGST), 83 to 86 (DGAD), and 96 to 99 (KGGG). The Proton acceptor role is filled by Glu105. Residue Lys123 participates in substrate binding.

It belongs to the ribose 5-phosphate isomerase family. Homodimer.

It carries out the reaction aldehydo-D-ribose 5-phosphate = D-ribulose 5-phosphate. It functions in the pathway carbohydrate degradation; pentose phosphate pathway; D-ribose 5-phosphate from D-ribulose 5-phosphate (non-oxidative stage): step 1/1. Catalyzes the reversible conversion of ribose-5-phosphate to ribulose 5-phosphate. The sequence is that of Ribose-5-phosphate isomerase A from Methylorubrum populi (strain ATCC BAA-705 / NCIMB 13946 / BJ001) (Methylobacterium populi).